The sequence spans 591 residues: Protein kinase C zeta type (591 aa).

The PB1 domain maps to 15-98; it reads RVRLKAHYSG…DGLILHVFPS (84 aa). An interaction with SQSTM1 region spans residues 79–145; the sequence is AFRLAGQHRD…KRFNRRAYCG (67 aa). The Phorbol-ester/DAG-type zinc finger occupies 130-180; the sequence is GHLFQAKRFNRRAYCGQCSERIWGLARQGYRCINCKLLVHKRCHGLVPLTC. One can recognise a Protein kinase domain in the interval 251–517; the sequence is FDLIRVIGRG…FSDIKSHAFF (267 aa). ATP contacts are provided by residues 257-265 and Lys280; that span reads IGRGSYAKV. Asp375 acts as the Proton acceptor in catalysis. Thr409 carries the phosphothreonine; by PDPK1 and PI3K modification. The region spanning 518-589 is the AGC-kinase C-terminal domain; the sequence is RSIDWDLLEK…INPLLLSTEE (72 aa). Phosphothreonine is present on Thr559. Phosphoserine is present on Ser590.

This sequence belongs to the protein kinase superfamily. AGC Ser/Thr protein kinase family. PKC subfamily. In terms of assembly, interacts with PARD6A, PARD6B and PARD6G. Part of a complex with PARD3, PARD6A or PARD6B or PARD6G and CDC42 or RAC1. Interacts with ADAP1/CENTA1. Interacts directly with SQSTM1. Forms a ternary complex with SQSTM1 and KCNAB2. Forms another ternary complex with SQSTM1 and GABRR3. Forms a complex with SQSTM1 and MAP2K5. Interacts (via the protein kinase domain) with WWC1. Forms a tripartite complex with WWC1 and DDR1, but predominantly in the absence of collagen. Component of the Par polarity complex, composed of at least phosphorylated PRKCZ, PARD3 and TIAM1. Interacts with PDPK1 (via N-terminal region). Interacts with WDFY2 (via WD repeats 1-3). Interacts with VAMP2. Forms a complex with WDFY2 and VAMP2. Interacts with APPL1. Interacts with WWC1, WWC2 and WWC3. CDH5 is required for its phosphorylation at Thr-409. Phosphorylated by protein kinase PDPK1; phosphorylation is inhibited by the apoptotic C-terminal cleavage product of PKN2. Phosphorylation at Thr-409 by PI3K activates the kinase.

It localises to the cytoplasm. The protein localises to the endosome. The protein resides in the cell junction. Its subcellular location is the membrane. It catalyses the reaction L-seryl-[protein] + ATP = O-phospho-L-seryl-[protein] + ADP + H(+). It carries out the reaction L-threonyl-[protein] + ATP = O-phospho-L-threonyl-[protein] + ADP + H(+). Atypical PKCs (PRKCI and PRKCZ) exhibit an elevated basal enzymatic activity (that may be due to the interaction with SMG1 or SQSTM1) and are not regulated by diacylglycerol, phosphatidylserine, phorbol esters or calcium ions. Two specific sites, Thr-409 (activation loop of the kinase domain) and Thr-559 (turn motif), need to be phosphorylated for its full activation. Phosphatidylinositol 3,4,5-trisphosphate might be a physiological activator. In terms of biological role, calcium- and diacylglycerol-independent serine/threonine-protein kinase that functions in phosphatidylinositol 3-kinase (PI3K) pathway and mitogen-activated protein (MAP) kinase cascade, and is involved in NF-kappa-B activation, mitogenic signaling, cell proliferation, cell polarity, inflammatory response and maintenance of long-term potentiation (LTP). Upon lipopolysaccharide (LPS) treatment in macrophages, or following mitogenic stimuli, functions downstream of PI3K to activate MAP2K1/MEK1-MAPK1/ERK2 signaling cascade independently of RAF1 activation. Required for insulin-dependent activation of AKT3, but may function as an adapter rather than a direct activator. Upon insulin treatment may act as a downstream effector of PI3K and contribute to the activation of translocation of the glucose transporter SLC2A4/GLUT4 and subsequent glucose transport in adipocytes. In EGF-induced cells, binds and activates MAP2K5/MEK5-MAPK7/ERK5 independently of its kinase activity and can activate JUN promoter through MEF2C. Through binding with SQSTM1/p62, functions in interleukin-1 signaling and activation of NF-kappa-B with the specific adapters RIPK1 and TRAF6. Participates in TNF-dependent transactivation of NF-kappa-B by phosphorylating and activating IKBKB kinase, which in turn leads to the degradation of NF-kappa-B inhibitors. In migrating astrocytes, forms a cytoplasmic complex with PARD6A and is recruited by CDC42 to function in the establishment of cell polarity along with the microtubule motor and dynein. In association with FEZ1, stimulates neuronal differentiation in PC12 cells. In the inflammatory response, is required for the T-helper 2 (Th2) differentiation process, including interleukin production, efficient activation of JAK1 and the subsequent phosphorylation and nuclear translocation of STAT6. May be involved in development of allergic airway inflammation (asthma), a process dependent on Th2 immune response. In the NF-kappa-B-mediated inflammatory response, can relieve SETD6-dependent repression of NF-kappa-B target genes by phosphorylating the RELA subunit at 'Ser-311'. Phosphorylates VAMP2 in vitro. Phosphorylates and activates LRRK1, which phosphorylates RAB proteins involved in intracellular trafficking. This is Protein kinase C zeta type (PRKCZ) from Oryctolagus cuniculus (Rabbit).